The sequence spans 844 residues: MEKTKTKQGENEHMPVNNPSTQIYQLQALASELKTGFTEAMQELSRIQHGEYALEEKVKSCRCSMEEKVTEMKNSLNYFKEELSNAMSMIQAITSKQEEMQQKIEQLQQEKRRESRKVKAKKTQKEEHSSQAGPAQAQGSPFRSINIPEPVLPSEDFTNLLPSQAYEKAQESRSVHVGDSNVKGMMGPGVNPTTPEAEENLKSCLSADIQSKGHLPSGMWRQPKDGKEWGEEYVTKDHPDKLKEAGQGRHSSLENVLCETSLAAKRQTVALELLESERKYVINISLILKIKATFQGSDGKRNSKERSLFPGSLRYLVQQHLDLLHALQERVLKWPRQGVLGDLFLKLTNDENNFLDYYVAYLRDLPECISLVHVVVLKEGDEEIKSDIYTLFFHIVQRIPEYLIHLQNVLKFTEQEHPDYYLLLVCVQRLRVFISHYTLLFQCNEDLLIQKRKKLKKSSMAKLYKGLASQCANAGQDASPTAGPEAVRDTGIHSEELLQPYPSAPSSGPAITHLMPPVKKSQQQQSLMESMQPGKPSDWELEGRKHERPESLLAPTQFCAAEQDVKALAGPLQAIPEMDFESSPAEPLGNVERSLRAPAELLPDARGFVPAAYEEFEYGGEIFALPAPYDEEPFQAPALFENCSPASSESSLDICFLRPVSFAMEAERPEHPLQPLPKSATSPAGSSSAYKLEAAAQAHGKAKPLSRSLKEFPRAPPADGVAPRLYSTRSSSGGRAPIKAERAAQAHGPAAAAVAARGASRTFFPQQRSQSEKQTYLEVRREMHLEDTTRFCPKEERESEQTSFSDQNPRQDQKGGFRSSFRKLFKKKNGNATGEDFCGPWGWW.

Basic and acidic residues-rich tracts occupy residues M1–H13 and Q101–R113. Disordered regions lie at residues M1–S20, Q101–F142, and A169–G189. Residues L54–S129 are a coiled coil. Positions S130 to F142 are enriched in polar residues. The 176-residue stretch at K265–L440 folds into the DH domain. Disordered regions lie at residues L498–L541, R668–S687, and A702–Q745. R757 bears the Omega-N-methylarginine mark. Basic and acidic residues predominate over residues D787–E800. The interval D787–W844 is disordered. Residues S820–N829 show a composition bias toward basic residues.

Its function is as follows. May act as a guanine-nucleotide releasing factor. The sequence is that of Rho guanine nucleotide exchange factor 33 (ARHGEF33) from Homo sapiens (Human).